The primary structure comprises 231 residues: LexA repressor (231 aa).

Residues arginine 31–glutamine 51 constitute a DNA-binding region (H-T-H motif). Active-site for autocatalytic cleavage activity residues include serine 148 and lysine 185.

This sequence belongs to the peptidase S24 family. Homodimer.

The enzyme catalyses Hydrolysis of Ala-|-Gly bond in repressor LexA.. Represses a number of genes involved in the response to DNA damage (SOS response), including recA and lexA. In the presence of single-stranded DNA, RecA interacts with LexA causing an autocatalytic cleavage which disrupts the DNA-binding part of LexA, leading to derepression of the SOS regulon and eventually DNA repair. This chain is LexA repressor, found in Leptothrix cholodnii (strain ATCC 51168 / LMG 8142 / SP-6) (Leptothrix discophora (strain SP-6)).